Here is a 278-residue protein sequence, read N- to C-terminus: Shikimate dehydrogenase (NADP(+)) (278 aa).

Shikimate contacts are provided by residues 19 to 21 (SRS) and threonine 66. The active-site Proton acceptor is the lysine 70. Shikimate is bound by residues asparagine 91 and aspartate 106. Residues 129-133 (GAGGA) and phenylalanine 221 each bind NADP(+). Tyrosine 223 lines the shikimate pocket. Glycine 242 provides a ligand contact to NADP(+).

It belongs to the shikimate dehydrogenase family. Homodimer.

It catalyses the reaction shikimate + NADP(+) = 3-dehydroshikimate + NADPH + H(+). Its pathway is metabolic intermediate biosynthesis; chorismate biosynthesis; chorismate from D-erythrose 4-phosphate and phosphoenolpyruvate: step 4/7. Its function is as follows. Involved in the biosynthesis of the chorismate, which leads to the biosynthesis of aromatic amino acids. Catalyzes the reversible NADPH linked reduction of 3-dehydroshikimate (DHSA) to yield shikimate (SA). This Anaeromyxobacter sp. (strain K) protein is Shikimate dehydrogenase (NADP(+)).